Reading from the N-terminus, the 366-residue chain is cAMP-dependent protein kinase regulatory subunit (366 aa).

A dimerization and phosphorylation region spans residues 1-121 (MSGGNEEDQL…SLESAMRKNL (121 aa)). Positions 55 to 87 (QRAQEGGNPDAADDDDIIVEPPKRSGGRRTGIS) are disordered. Residues 82–86 (RRTGI) carry the Pseudophosphorylation motif motif. Phosphoserine is present on Ser-87. 3',5'-cyclic AMP-binding positions include 122–239 (LFAH…SKVQ), Glu-187, Arg-196, 240–366 (ILAD…KLMT), Glu-311, and Arg-320.

It belongs to the cAMP-dependent kinase regulatory chain family. Tetramer, composed of 2 regulatory (R) and 2 catalytic (C) subunits. In the presence of cAMP it dissociates into 2 active monomeric C subunits and an R dimer that binds four cAMP molecules. The pseudophosphorylation site binds to the substrate-binding region of the catalytic chain but is not phosphorylated. The physiological significance of phosphorylations by other kinases is unclear.

It is found in the cytoplasm. Its subcellular location is the cytosol. Functionally, controls the rhythmic contraction of enteric muscles probably by regulating G-protein coupled receptor aex-2-mediated calcium influx in GABAergic DVB neurons. The polypeptide is cAMP-dependent protein kinase regulatory subunit (kin-2) (Caenorhabditis elegans).